Reading from the N-terminus, the 526-residue chain is CTP synthase (526 aa).

The interval 1–270 is amidoligase domain; sequence MKYIFVTGGV…ADVLSTHLGL (270 aa). S12 contributes to the CTP binding site. S12 serves as a coordination point for UTP. ATP contacts are provided by residues 13-18 and D70; that span reads GLGKGI. Positions 70 and 145 each coordinate Mg(2+). Residues 152-154, 191-196, and K227 each bind CTP; these read DIE and KTKPTQ. UTP-binding positions include 191–196 and K227; that span reads KTKPTQ. The 233-residue stretch at 293–525 folds into the Glutamine amidotransferase type-1 domain; the sequence is VAIVSKYGIE…VEACRANKRT (233 aa). G349 is an L-glutamine binding site. The active-site Nucleophile; for glutamine hydrolysis is the C376. L-glutamine-binding positions include 377-380, E400, and R455; that span reads LGFQ. Active-site residues include H498 and E500.

Belongs to the CTP synthase family. In terms of assembly, homotetramer.

It catalyses the reaction UTP + L-glutamine + ATP + H2O = CTP + L-glutamate + ADP + phosphate + 2 H(+). The catalysed reaction is L-glutamine + H2O = L-glutamate + NH4(+). The enzyme catalyses UTP + NH4(+) + ATP = CTP + ADP + phosphate + 2 H(+). Its pathway is pyrimidine metabolism; CTP biosynthesis via de novo pathway; CTP from UDP: step 2/2. Allosterically activated by GTP, when glutamine is the substrate; GTP has no effect on the reaction when ammonia is the substrate. The allosteric effector GTP functions by stabilizing the protein conformation that binds the tetrahedral intermediate(s) formed during glutamine hydrolysis. Inhibited by the product CTP, via allosteric rather than competitive inhibition. Its function is as follows. Catalyzes the ATP-dependent amination of UTP to CTP with either L-glutamine or ammonia as the source of nitrogen. Regulates intracellular CTP levels through interactions with the four ribonucleotide triphosphates. In Methanoregula boonei (strain DSM 21154 / JCM 14090 / 6A8), this protein is CTP synthase.